A 91-amino-acid polypeptide reads, in one-letter code: UPF0250 protein PputW619_0619 (91 aa).

It belongs to the UPF0250 family.

The polypeptide is UPF0250 protein PputW619_0619 (Pseudomonas putida (strain W619)).